Reading from the N-terminus, the 300-residue chain is Sulfate adenylyltransferase subunit 2 (300 aa).

Residues 281–300 (RAIDRDEAGSMEKKKREGYF) form a disordered region.

It belongs to the PAPS reductase family. CysD subfamily. Heterodimer composed of CysD, the smaller subunit, and CysN.

The enzyme catalyses sulfate + ATP + H(+) = adenosine 5'-phosphosulfate + diphosphate. Its pathway is sulfur metabolism; hydrogen sulfide biosynthesis; sulfite from sulfate: step 1/3. Functionally, with CysN forms the ATP sulfurylase (ATPS) that catalyzes the adenylation of sulfate producing adenosine 5'-phosphosulfate (APS) and diphosphate, the first enzymatic step in sulfur assimilation pathway. APS synthesis involves the formation of a high-energy phosphoric-sulfuric acid anhydride bond driven by GTP hydrolysis by CysN coupled to ATP hydrolysis by CysD. The sequence is that of Sulfate adenylyltransferase subunit 2 from Brucella canis (strain ATCC 23365 / NCTC 10854 / RM-666).